A 972-amino-acid chain; its full sequence is mRNA transport regulator MTR10 (972 aa).

Its subcellular location is the nucleus. Functionally, involved in mRNA transport from nucleus to cytoplasm. The chain is mRNA transport regulator MTR10 (MTR10) from Saccharomyces cerevisiae (strain ATCC 204508 / S288c) (Baker's yeast).